Here is a 365-residue protein sequence, read N- to C-terminus: sn-glycerol-3-phosphate import ATP-binding protein UgpC (365 aa).

The ABC transporter domain maps to 4 to 234 (LSLRNVQKHY…PASTFVAGFI (231 aa)). An ATP-binding site is contributed by 36–43 (GPSGCGKS).

The protein belongs to the ABC transporter superfamily. sn-glycerol-3-phosphate importer (TC 3.A.1.1.3) family. In terms of assembly, the complex is composed of two ATP-binding proteins (UgpC), two transmembrane proteins (UgpA and UgpE) and a solute-binding protein (UgpB).

Its subcellular location is the cell inner membrane. The enzyme catalyses sn-glycerol 3-phosphate(out) + ATP + H2O = sn-glycerol 3-phosphate(in) + ADP + phosphate + H(+). Its function is as follows. Part of the ABC transporter complex UgpBAEC involved in sn-glycerol-3-phosphate (G3P) import. Responsible for energy coupling to the transport system. This Ralstonia nicotianae (strain ATCC BAA-1114 / GMI1000) (Ralstonia solanacearum) protein is sn-glycerol-3-phosphate import ATP-binding protein UgpC.